A 216-amino-acid polypeptide reads, in one-letter code: Maintenance of carboxysome distribution protein A (216 aa).

ATP contacts are provided by Gly-18, Gly-19, Gly-21, Lys-22, Thr-23, Thr-24, and Gln-47. Residue Thr-23 participates in Mg(2+) binding.

Belongs to the ParA family. McdA subfamily. Homodimerizes in the presence of ATP. Each subunit binds 1 ATP molecule; some residues cross the dimer interface to contact ATP in the other subunit. Forms a complex with McdB.

It localises to the cytoplasm. Its subcellular location is the nucleoid. It catalyses the reaction ATP + H2O = ADP + phosphate + H(+). McdA and McdB together mediate carboxysome (Cb) spacing, size, ultrastructure and probably inheritance in the cell, together they prevent Cb aggregation. McdA is an ATPase that forms dynamic gradients on the nucleoid in response to adapter protein McdB, which associates with carboxysomes. The interplay between McdA gradients on the nucleoid and McdB-bound carboxysomes result in the equal spacing of Cbs along the cell length. Functionally, incorrect positioning (aggregation) of carboxysomes results in reduced CO(2) fixation by encapsulated ribulose-1,5-bisphosphate carboxylase (RuBisCO, cbbL/cbbS), which leads to slower growth. The protein is Maintenance of carboxysome distribution protein A of Gloeobacter kilaueensis (strain ATCC BAA-2537 / CCAP 1431/1 / ULC 316 / JS1).